A 637-amino-acid polypeptide reads, in one-letter code: Chaperone protein HtpG (637 aa).

Residues 1-338 form an a; substrate-binding region; the sequence is MTSTIDKNGA…SADLPLNISR (338 aa). Residues 339-552 are b; the sequence is EMIQESPILA…ESGPDRQLEK (214 aa). The tract at residues 553-637 is c; that stretch reads ILLGVGQLAG…LRRSSAGGGD (85 aa).

The protein belongs to the heat shock protein 90 family. As to quaternary structure, homodimer.

It is found in the cytoplasm. Its function is as follows. Molecular chaperone. Has ATPase activity. This Nitrobacter winogradskyi (strain ATCC 25391 / DSM 10237 / CIP 104748 / NCIMB 11846 / Nb-255) protein is Chaperone protein HtpG.